A 1895-amino-acid polypeptide reads, in one-letter code: Diacylglycerol kinase eta (1895 aa).

Residues 1–10 are compositionally biased toward basic and acidic residues; sequence MAHLKLDTLH. The tract at residues 1–37 is disordered; that stretch reads MAHLKLDTLHVQRSPRGSRRSSPSSGRSSACSSGSIS. The span at 20–37 shows a compositional bias: low complexity; it reads RSSPSSGRSSACSSGSIS. A PH domain is found at 82–175; that stretch reads AIIKEGFLLK…WLGSLKTATA (94 aa). 2 consecutive Phorbol-ester/DAG-type zinc fingers follow at residues 195–245 and 267–318; these read HHHW…IANC and PHQW…AVAC. Residues 349-485 enclose the DAGKc domain; it reads GNFSPLLVFV…DRWSIMVFEK (137 aa). Disordered regions lie at residues 781-801, 1012-1053, 1113-1137, and 1172-1191; these read ANID…ENTP, TTLC…MARL, QHRG…GANL, and PNTI…HGQD. The segment covering 1113–1128 has biased composition (basic and acidic residues); sequence QHRGGDNDSDYPEHEQ. Residues 1172-1184 show a composition bias toward polar residues; the sequence is PNTILTTSTSPTK. An SAM domain is found at 1832-1895; that stretch reads WSVNEVVTWL…LQAIKDLSEN (64 aa).

The protein belongs to the eukaryotic diacylglycerol kinase family.

The protein resides in the cytoplasm. The enzyme catalyses a 1,2-diacyl-sn-glycerol + ATP = a 1,2-diacyl-sn-glycero-3-phosphate + ADP + H(+). Phosphorylates diacylglycerol (DAG) to generate phosphatidic acid (PA). This chain is Diacylglycerol kinase eta, found in Drosophila melanogaster (Fruit fly).